A 340-amino-acid polypeptide reads, in one-letter code: Guanine nucleotide-binding protein G(I)/G(S)/G(T) subunit beta-1 (340 aa).

Residue Ser2 is modified to N-acetylserine. A Phosphoserine modification is found at Ser2. 7 WD repeats span residues 46–94 (RTRR…HAIP), 95–140 (LRSS…RELA), 141–181 (GHTG…TTFT), 182–223 (GHTG…QTFT), 224–267 (GHES…YSHD), 268–309 (NIIC…GVLA), and 310–340 (GHDN…KIWN). Position 266 is a phosphohistidine (His266).

This sequence belongs to the WD repeat G protein beta family. As to quaternary structure, g proteins are composed of 3 units, alpha, beta and gamma. The heterodimer formed by GNB1 and GNG2 interacts with ARHGEF5. The heterodimer formed by GNB1 and GNG2 interacts with GRK2. Forms a complex with GNAO1 and GNG3. Interacts with ARHGEF18 and RASD2. Forms complexes with TAS2R14 and G-proteins; these complexes play a role in the perception of bitterness. Component of the TAS2R14-GNAI1 complex, consisting of TAS2R14, GNAI1, GNB1 and GNG2. Component of the TAS2R14-GNAT3 complex, consisting of TAS2R14, GNAT3, GNB1 and GNG2. Component of the TAS2R14-GNAS2 complex, consisting of TAS2R14, GNAS2, GNB1 and GNG2. Post-translationally, phosphorylation at His-266 by NDKB contributes to G protein activation by increasing the high energetic phosphate transfer onto GDP.

Its function is as follows. Guanine nucleotide-binding proteins (G proteins) are involved as a modulator or transducer in various transmembrane signaling systems. The beta and gamma chains are required for the GTPase activity, for replacement of GDP by GTP, and for G protein-effector interaction. The polypeptide is Guanine nucleotide-binding protein G(I)/G(S)/G(T) subunit beta-1 (GNB1) (Bos taurus (Bovine)).